The primary structure comprises 187 residues: Urease accessory protein UreE (187 aa).

The segment at 154 to 187 (RANSAQGHGHSHGHSHSHDHHGYHHHGDGNWHKH) is disordered. A compositionally biased stretch (basic residues) spans 162–177 (GHSHGHSHSHDHHGYH). The segment covering 178–187 (HHGDGNWHKH) has biased composition (basic and acidic residues).

The protein belongs to the UreE family.

It is found in the cytoplasm. In terms of biological role, involved in urease metallocenter assembly. Binds nickel. Probably functions as a nickel donor during metallocenter assembly. In Actinobacillus pleuropneumoniae (Haemophilus pleuropneumoniae), this protein is Urease accessory protein UreE.